Here is a 240-residue protein sequence, read N- to C-terminus: Homeobox protein goosecoid (240 aa).

The homeobox DNA-binding region spans 146 to 205 (KRRHRTIFTDEQLEALENLFQETKYPDVGTREQLARKVHLREEKVEVWFKNRRAKWRRQK). A disordered region spans residues 199 to 240 (AKWRRQKRSSSEESENSQKWNKSTKTTSEKIEEGKSDVDSDS). Basic and acidic residues predominate over residues 225 to 240 (TSEKIEEGKSDVDSDS).

This sequence belongs to the paired homeobox family. Bicoid subfamily.

It is found in the nucleus. This Danio rerio (Zebrafish) protein is Homeobox protein goosecoid (gsc).